The chain runs to 425 residues: MRDPPAPLFRRDNMLEFYFSYRGVLKRLRSGALGGEMDRLAEHFLTLGYKRASAKIYLSRVARFSQFAATRCGLMPIHQDVIDSYLGTFTTDTPRIGAVSALAHARRVAPERFIIPVPSEEADPDALLLASFSDYLRTVRGLEPKTREGILLGGRRFLDWFRHRHPGQNLEALTAEHVLAAVEHRLSLSATSGTRTAATSHIRTFLRFLCWAGHHRQDLARIVPRTPYWRLAHLPPRLAWGDVRRAIDAIGATTPVAIRDRAVLLLLATTGIRNGELRAIRLQDIDWRTGEVFIRRTKGKRDRVVPLLEETGAALVDYILRARPKVDSPYLFLSFTPPVGAFKSAAPVSRIVRKRLRHGGVELGRVAGAHLLRHSLATQLVGQRRPINEVADLLGHRSINTTALYVKVAASQLAEVALPFPGGAA.

The Core-binding (CB) domain occupies 123–210; it reads DPDALLLASF…HIRTFLRFLC (88 aa). The Tyr recombinase domain occupies 233 to 418; that stretch reads HLPPRLAWGD…AASQLAEVAL (186 aa). Residues R273, K298, H370, R373, and H396 contribute to the active site. The O-(3'-phospho-DNA)-tyrosine intermediate role is filled by Y405.

The protein belongs to the 'phage' integrase family.

The sequence is that of Putative integrase/recombinase y4rF from Sinorhizobium fredii (strain NBRC 101917 / NGR234).